The sequence spans 369 residues: Epoxyqueuosine reductase (369 aa).

Aspartate 135 (proton donor) is an active-site residue. The 4Fe-4S ferredoxin-type domain occupies 177 to 209 (IPLPVDEPSENQCGKCTACITSCPTNAIVAEGV). [4Fe-4S] cluster-binding residues include cysteine 189, cysteine 192, cysteine 195, cysteine 199, cysteine 215, cysteine 242, cysteine 245, and cysteine 249.

It belongs to the QueG family. As to quaternary structure, monomer. Cob(II)alamin serves as cofactor. The cofactor is [4Fe-4S] cluster.

The protein localises to the cytoplasm. It carries out the reaction epoxyqueuosine(34) in tRNA + AH2 = queuosine(34) in tRNA + A + H2O. It functions in the pathway tRNA modification; tRNA-queuosine biosynthesis. In terms of biological role, catalyzes the conversion of epoxyqueuosine (oQ) to queuosine (Q), which is a hypermodified base found in the wobble positions of tRNA(Asp), tRNA(Asn), tRNA(His) and tRNA(Tyr). This Vibrio cholerae serotype O1 (strain ATCC 39315 / El Tor Inaba N16961) protein is Epoxyqueuosine reductase.